The sequence spans 199 residues: Adenylyl-sulfate kinase (199 aa).

34–41 (GLSGSGKS) is a binding site for ATP. S108 serves as the catalytic Phosphoserine intermediate.

The protein belongs to the APS kinase family.

The catalysed reaction is adenosine 5'-phosphosulfate + ATP = 3'-phosphoadenylyl sulfate + ADP + H(+). It participates in sulfur metabolism; hydrogen sulfide biosynthesis; sulfite from sulfate: step 2/3. Functionally, catalyzes the synthesis of activated sulfate. In Oceanobacillus iheyensis (strain DSM 14371 / CIP 107618 / JCM 11309 / KCTC 3954 / HTE831), this protein is Adenylyl-sulfate kinase.